The following is a 1025-amino-acid chain: Multidrug resistance protein MdtC (1025 aa).

The next 12 helical transmembrane spans lie at F3–L23, E333–L353, I360–C380, L387–L407, V431–L451, F463–P483, L528–P548, V853–S873, V875–L895, L897–V917, P953–G973, and I984–V1004.

It belongs to the resistance-nodulation-cell division (RND) (TC 2.A.6) family. MdtC subfamily. Part of a tripartite efflux system composed of MdtA, MdtB and MdtC. MdtC forms a heteromultimer with MdtB.

The protein resides in the cell inner membrane. The chain is Multidrug resistance protein MdtC from Shigella boydii serotype 4 (strain Sb227).